Consider the following 560-residue polypeptide: Cilia- and flagella-associated protein 184 (560 aa).

Basic and acidic residues predominate over residues 1–12; it reads MEGGSEHTKDPG. The interval 1 to 209 is disordered; it reads MEGGSEHTKD…QEEGKPLGGR (209 aa). Acidic residues-rich tracts occupy residues 41-61 and 101-110; these read GELE…EEEA and EPEEPAEAGA. Composition is skewed to basic and acidic residues over residues 127–144 and 179–209; these read AEAR…KEVR and ETRR…LGGR. 2 coiled-coil regions span residues 357–481 and 510–536; these read QAAL…QGRD and DSLL…LKRH.

It belongs to the CFAP184 family. In terms of assembly, forms a complex with CFAP263; the interaction is required for functional activity in cilia.

It localises to the cell projection. It is found in the cilium. The protein localises to the cytoplasm. The protein resides in the cytoskeleton. Its subcellular location is the microtubule organizing center. It localises to the centrosome. In complex with CFAP263, acts as a regulator of ciliary beating that connects radial spoke 3 (RS3) to the inner dynein arm (IDA) and the nexin-dynein regulatory complex (N-DRC). The complex is positioned parallel to N-DRC and forms a connection between the arch at the base of RS3, the IDA tail and N-DRC. This is Cilia- and flagella-associated protein 184 (CFAP184) from Macaca fascicularis (Crab-eating macaque).